Consider the following 756-residue polypeptide: DNA mismatch repair protein Mlh1 (756 aa).

Ser2 is modified (N-acetylserine). Lys33 bears the N6-acetyllysine mark. ATP contacts are provided by residues Asn38, Asp63, 82 to 84 (TSK), and 100 to 104 (RGEAL). Lys241 and Lys361 each carry N6-acetyllysine. Disordered regions lie at residues 355–378 (PSGE…SDKV) and 400–491 (LSKP…KEMT). Residues 362–375 (STTSLTSSSTSGSS) show a composition bias toward low complexity. An N6-acetyllysine modification is found at Lys377. Positions 410–650 (AIVTEDKTDI…LLIDNYVPPL (241 aa)) are interaction with EXO1. The span at 443 to 457 (KNQSLEGDTTKGTSE) shows a compositional bias: polar residues. The Nuclear localization signal motif lies at 471 to 474 (KRHR). The residue at position 477 (Ser477) is a Phosphoserine.

Belongs to the DNA mismatch repair MutL/HexB family. In terms of assembly, component of the DNA mismatch repair (MMR) complex composed at least of MSH2, MSH3, MSH6, PMS1 and MLH1. Heterodimer of MLH1 and PMS2 (MutL alpha), MLH1 and PMS1 (MutL beta) or MLH1 and MLH3 (MutL gamma). Forms a ternary complex with MutS alpha (MSH2-MSH6) or MutS beta (MSH2-MSH3). Part of the BRCA1-associated genome surveillance complex (BASC), which contains BRCA1, MSH2, MSH6, MLH1, ATM, BLM, PMS2 and the RAD50-MRE11-NBS1 protein complex. This association could be a dynamic process changing throughout the cell cycle and within subnuclear domains. Interacts with MCM9; the interaction recruits MLH1 to chromatin. Interacts with MCM8. Interacts with PMS2; this interaction promotes MLH1 stability. Interacts with MBD4. Interacts with EXO1. Interacts with MTMR15/FAN1. Post-translationally, acetylated. Deacetylated by HDAC6 which prevents the MutL alpha complex, formed by the MLH1-PMS2 heterodimer, from being recruited to the MutS alpha complex, formed by the MSH2-MSH6 heterodimer, leading to tolerance of DNA damage. In terms of processing, ubiquitinated by UBR4; leading to proteasomal degradation. This ubiquitination is counteracted by the deubiquitinase USP5. In terms of tissue distribution, colon, lymphocytes, breast, lung, spleen, testis, prostate, thyroid, gall bladder and heart.

The protein localises to the nucleus. Its subcellular location is the chromosome. In terms of biological role, heterodimerizes with PMS2 to form MutL alpha, a component of the post-replicative DNA mismatch repair system (MMR). DNA repair is initiated by MutS alpha (MSH2-MSH6) or MutS beta (MSH2-MSH3) binding to a dsDNA mismatch, then MutL alpha is recruited to the heteroduplex. Assembly of the MutL-MutS-heteroduplex ternary complex in presence of RFC and PCNA is sufficient to activate endonuclease activity of PMS2. It introduces single-strand breaks near the mismatch and thus generates new entry points for the exonuclease EXO1 to degrade the strand containing the mismatch. DNA methylation would prevent cleavage and therefore assure that only the newly mutated DNA strand is going to be corrected. MutL alpha (MLH1-PMS2) interacts physically with the clamp loader subunits of DNA polymerase III, suggesting that it may play a role to recruit the DNA polymerase III to the site of the MMR. Also implicated in DNA damage signaling, a process which induces cell cycle arrest and can lead to apoptosis in case of major DNA damages. Heterodimerizes with MLH3 to form MutL gamma which plays a role in meiosis. The chain is DNA mismatch repair protein Mlh1 (MLH1) from Homo sapiens (Human).